The primary structure comprises 506 residues: Aspartic proteinase A1 (506 aa).

The N-terminal stretch at methionine 1–alanine 24 is a signal peptide. Residues glutamate 25–glycine 64 constitute a propeptide, activation peptide. The Peptidase A1 domain maps to tyrosine 82–alanine 503. Aspartate 100 is a catalytic residue. 2 disulfides stabilise this stretch: cysteine 113–cysteine 119 and cysteine 278–cysteine 282. Aspartate 287 is an active-site residue. Residues valine 312–proline 417 form the Saposin B-type domain. 4 cysteine pairs are disulfide-bonded: cysteine 317-cysteine 411, cysteine 342-cysteine 383, cysteine 348-cysteine 380, and cysteine 425-cysteine 462. N-linked (GlcNAc...) asparagine glycosylation is present at asparagine 397.

The protein belongs to the peptidase A1 family. As to expression, expressed in roots, leaves, stems, petals, carpels, seed pods and dry seeds.

It localises to the vacuole. Involved in the breakdown of propeptides of storage proteins in protein-storage vacuoles. Possesses aspartic protease activity in vitro. The chain is Aspartic proteinase A1 (APA1) from Arabidopsis thaliana (Mouse-ear cress).